Reading from the N-terminus, the 305-residue chain is UDP-3-O-acyl-N-acetylglucosamine deacetylase (305 aa).

Zn(2+) is bound by residues His-79, His-238, and Asp-242. His-265 acts as the Proton donor in catalysis.

Belongs to the LpxC family. The cofactor is Zn(2+).

It catalyses the reaction a UDP-3-O-[(3R)-3-hydroxyacyl]-N-acetyl-alpha-D-glucosamine + H2O = a UDP-3-O-[(3R)-3-hydroxyacyl]-alpha-D-glucosamine + acetate. Its pathway is glycolipid biosynthesis; lipid IV(A) biosynthesis; lipid IV(A) from (3R)-3-hydroxytetradecanoyl-[acyl-carrier-protein] and UDP-N-acetyl-alpha-D-glucosamine: step 2/6. In terms of biological role, catalyzes the hydrolysis of UDP-3-O-myristoyl-N-acetylglucosamine to form UDP-3-O-myristoylglucosamine and acetate, the committed step in lipid A biosynthesis. The sequence is that of UDP-3-O-acyl-N-acetylglucosamine deacetylase from Vibrio parahaemolyticus serotype O3:K6 (strain RIMD 2210633).